A 586-amino-acid chain; its full sequence is Arginine--tRNA ligase (586 aa).

Residues alanine 130 to histidine 140 carry the 'HIGH' region motif.

This sequence belongs to the class-I aminoacyl-tRNA synthetase family. In terms of assembly, monomer.

The protein resides in the cytoplasm. It catalyses the reaction tRNA(Arg) + L-arginine + ATP = L-arginyl-tRNA(Arg) + AMP + diphosphate. The protein is Arginine--tRNA ligase of Methylobacterium sp. (strain 4-46).